The primary structure comprises 948 residues: Valine--tRNA ligase (948 aa).

The 'HIGH' region motif lies at 40–50 (PNVTGSLHMGH). The 'KMSKS' region motif lies at 551–555 (KMSKS). K554 lines the ATP pocket. Positions 879–947 (LIDKGAELAR…LAEQHARISS (69 aa)) form a coiled coil.

Belongs to the class-I aminoacyl-tRNA synthetase family. ValS type 1 subfamily. In terms of assembly, monomer.

Its subcellular location is the cytoplasm. It catalyses the reaction tRNA(Val) + L-valine + ATP = L-valyl-tRNA(Val) + AMP + diphosphate. In terms of biological role, catalyzes the attachment of valine to tRNA(Val). As ValRS can inadvertently accommodate and process structurally similar amino acids such as threonine, to avoid such errors, it has a 'posttransfer' editing activity that hydrolyzes mischarged Thr-tRNA(Val) in a tRNA-dependent manner. The polypeptide is Valine--tRNA ligase (Pseudomonas fluorescens (strain ATCC BAA-477 / NRRL B-23932 / Pf-5)).